We begin with the raw amino-acid sequence, 161 residues long: 2-C-methyl-D-erythritol 2,4-cyclodiphosphate synthase (161 aa).

A divalent metal cation-binding residues include D9 and H11. Residues 9–11 and 37–38 contribute to the 4-CDP-2-C-methyl-D-erythritol 2-phosphate site; these read DFH and HS. H45 provides a ligand contact to a divalent metal cation. 4-CDP-2-C-methyl-D-erythritol 2-phosphate contacts are provided by residues 59-61, 64-68, 135-138, and R145; these read DIG, FPDTD, and TTTE.

Belongs to the IspF family. Homotrimer. It depends on a divalent metal cation as a cofactor.

It carries out the reaction 4-CDP-2-C-methyl-D-erythritol 2-phosphate = 2-C-methyl-D-erythritol 2,4-cyclic diphosphate + CMP. It functions in the pathway isoprenoid biosynthesis; isopentenyl diphosphate biosynthesis via DXP pathway; isopentenyl diphosphate from 1-deoxy-D-xylulose 5-phosphate: step 4/6. Its function is as follows. Involved in the biosynthesis of isopentenyl diphosphate (IPP) and dimethylallyl diphosphate (DMAPP), two major building blocks of isoprenoid compounds. Catalyzes the conversion of 4-diphosphocytidyl-2-C-methyl-D-erythritol 2-phosphate (CDP-ME2P) to 2-C-methyl-D-erythritol 2,4-cyclodiphosphate (ME-CPP) with a corresponding release of cytidine 5-monophosphate (CMP). This chain is 2-C-methyl-D-erythritol 2,4-cyclodiphosphate synthase, found in Leptospira interrogans serogroup Icterohaemorrhagiae serovar Lai (strain 56601).